A 329-amino-acid chain; its full sequence is Transcription factor RAX1 (329 aa).

HTH myb-type domains lie at 9–62 (KTKV…LNYL) and 63–117 (RPNI…RKKL). 2 consecutive DNA-binding regions (H-T-H motif) follow at residues 38 to 62 (WISFPLKAGLRRCGKSCRLRWLNYL) and 90 to 113 (WSIIAAHLPGRTDNDIKNYWNTKL). 2 stretches are compositionally biased toward low complexity: residues 122–131 (SDSSSSAMAS) and 144–154 (PTSPTTIPSSS). The disordered stretch occupies residues 122–162 (SDSSSSAMASPYLNPISQDVKRPTSPTTIPSSSYNPYAENP).

In terms of tissue distribution, mostly expressed in roots. Also present in shoot tips and flower buds.

It is found in the nucleus. Functionally, transcription activator of genes involved in the regulation of meristematic competence, such as CUC2. Positively regulates axillary meristems (AMs) formation and development, especially at early phases of vegetative growth, probably by specifying a stem cell niche for AM formation. Modulates the negative regulation mediated by gibberellic acid on the timing of developmental phase transitions. The sequence is that of Transcription factor RAX1 (RAX1) from Arabidopsis thaliana (Mouse-ear cress).